A 353-amino-acid polypeptide reads, in one-letter code: Probable dual-specificity RNA methyltransferase RlmN (353 aa).

Glu95 acts as the Proton acceptor in catalysis. Positions 103-333 (DGGRKTICIS…PILNRRSPGR (231 aa)) constitute a Radical SAM core domain. A disulfide bridge connects residues Cys110 and Cys339. [4Fe-4S] cluster is bound by residues Cys117, Cys121, and Cys124. Residues 164–165 (GE), Ser196, 219–221 (SLN), and Asn296 contribute to the S-adenosyl-L-methionine site. Cys339 acts as the S-methylcysteine intermediate in catalysis.

Belongs to the radical SAM superfamily. RlmN family. It depends on [4Fe-4S] cluster as a cofactor.

The protein resides in the cytoplasm. The catalysed reaction is adenosine(2503) in 23S rRNA + 2 reduced [2Fe-2S]-[ferredoxin] + 2 S-adenosyl-L-methionine = 2-methyladenosine(2503) in 23S rRNA + 5'-deoxyadenosine + L-methionine + 2 oxidized [2Fe-2S]-[ferredoxin] + S-adenosyl-L-homocysteine. It catalyses the reaction adenosine(37) in tRNA + 2 reduced [2Fe-2S]-[ferredoxin] + 2 S-adenosyl-L-methionine = 2-methyladenosine(37) in tRNA + 5'-deoxyadenosine + L-methionine + 2 oxidized [2Fe-2S]-[ferredoxin] + S-adenosyl-L-homocysteine. Functionally, specifically methylates position 2 of adenine 2503 in 23S rRNA and position 2 of adenine 37 in tRNAs. The sequence is that of Probable dual-specificity RNA methyltransferase RlmN from Leptospira biflexa serovar Patoc (strain Patoc 1 / Ames).